We begin with the raw amino-acid sequence, 298 residues long: ATP synthase F(1) complex subunit gamma, mitochondrial (298 aa).

Residues 1–25 (MFSRAGVAGLSAWTLQPQWIQVRNM) constitute a mitochondrion transit peptide. Position 39 is an N6-acetyllysine (Lys-39). Lys-49 carries the N6-succinyllysine modification. Lys-55 is modified (N6-acetyllysine). At Lys-115 the chain carries N6-acetyllysine; alternate. Lys-115 is subject to N6-succinyllysine; alternate. Ser-146 carries the phosphoserine modification. Residue Lys-154 is modified to N6-acetyllysine; alternate. At Lys-154 the chain carries N6-succinyllysine; alternate. Lys-197 is subject to N6-acetyllysine. Lys-270 carries the post-translational modification N6-succinyllysine.

The protein belongs to the ATPase gamma chain family. Component of the ATP synthase complex composed at least of ATP5F1A/subunit alpha, ATP5F1B/subunit beta, ATP5MC1/subunit c (homooctomer), MT-ATP6/subunit a, MT-ATP8/subunit 8, ATP5ME/subunit e, ATP5MF/subunit f, ATP5MG/subunit g, ATP5MK/subunit k, ATP5MJ/subunit j, ATP5F1C/subunit gamma, ATP5F1D/subunit delta, ATP5F1E/subunit epsilon, ATP5PF/subunit F6, ATP5PB/subunit b, ATP5PD/subunit d, ATP5PO/subunit OSCP. ATP synthase complex consists of a soluble F(1) head domain (subunits alpha(3) and beta(3)) - the catalytic core - and a membrane F(0) domain - the membrane proton channel (subunits c, a, 8, e, f, g, k and j). These two domains are linked by a central stalk (subunits gamma, delta, and epsilon) rotating inside the F1 region and a stationary peripheral stalk (subunits F6, b, d, and OSCP). Interacts with FLVCR2; this interaction occurs in the absence of heme and is disrupted upon heme binding.

It is found in the mitochondrion inner membrane. Functionally, subunit gamma, of the mitochondrial membrane ATP synthase complex (F(1)F(0) ATP synthase or Complex V) that produces ATP from ADP in the presence of a proton gradient across the membrane which is generated by electron transport complexes of the respiratory chain. ATP synthase complex consist of a soluble F(1) head domain - the catalytic core - and a membrane F(1) domain - the membrane proton channel. These two domains are linked by a central stalk rotating inside the F(1) region and a stationary peripheral stalk. During catalysis, ATP synthesis in the catalytic domain of F(1) is coupled via a rotary mechanism of the central stalk subunits to proton translocation. In vivo, can only synthesize ATP although its ATP hydrolase activity can be activated artificially in vitro. With the central stalk subunit delta, is essential for the biogenesis of F(1) catalytic part of the ATP synthase complex namely in the formation of F1 assembly intermediate. The polypeptide is ATP synthase F(1) complex subunit gamma, mitochondrial (Macaca fascicularis (Crab-eating macaque)).